The following is a 497-amino-acid chain: Cytochrome P450 2D6 (497 aa).

Position 301 (aspartate 301) interacts with substrate. Cysteine 443 provides a ligand contact to heme.

Belongs to the cytochrome P450 family. Heme is required as a cofactor.

It localises to the endoplasmic reticulum membrane. The protein localises to the microsome membrane. The catalysed reaction is (5Z,8Z,11Z,14Z)-eicosatetraenoate + reduced [NADPH--hemoprotein reductase] + O2 = (8R,9S)-epoxy-(5Z,11Z,14Z)-eicosatrienoate + oxidized [NADPH--hemoprotein reductase] + H2O + H(+). It catalyses the reaction (5Z,8Z,11Z,14Z)-eicosatetraenoate + reduced [NADPH--hemoprotein reductase] + O2 = (11R,12S)-epoxy-(5Z,8Z,14Z)-eicosatrienoate + oxidized [NADPH--hemoprotein reductase] + H2O + H(+). The enzyme catalyses (5Z,8Z,11Z,14Z)-eicosatetraenoate + reduced [NADPH--hemoprotein reductase] + O2 = (14S,15R)-epoxy-(5Z,8Z,11Z)-eicosatrienoate + oxidized [NADPH--hemoprotein reductase] + H2O + H(+). It carries out the reaction N-(5Z,8Z,11Z,14Z-eicosatetraenoyl)-ethanolamine + reduced [NADPH--hemoprotein reductase] + O2 = N-(8,9-epoxy-5Z,11Z,14Z-eicosatrienoyl)-ethanolamine + oxidized [NADPH--hemoprotein reductase] + H2O + H(+). The catalysed reaction is N-(5Z,8Z,11Z,14Z-eicosatetraenoyl)-ethanolamine + reduced [NADPH--hemoprotein reductase] + O2 = N-(11,12-epoxy-5Z,8Z,14Z-eicosatrienoyl)-ethanolamine + oxidized [NADPH--hemoprotein reductase] + H2O + H(+). It catalyses the reaction N-(5Z,8Z,11Z,14Z-eicosatetraenoyl)-ethanolamine + reduced [NADPH--hemoprotein reductase] + O2 = N-(14,15-epoxy-5Z,8Z,11Z-eicosatrienoyl)-ethanolamine + oxidized [NADPH--hemoprotein reductase] + H2O + H(+). The enzyme catalyses N-(5Z,8Z,11Z,14Z-eicosatetraenoyl)-ethanolamine + reduced [NADPH--hemoprotein reductase] + O2 = N-(20-hydroxy-5Z,8Z,11Z,14Z-eicosatetraenoyl)-ethanolamine + oxidized [NADPH--hemoprotein reductase] + H2O + H(+). It carries out the reaction (5Z,8Z,11Z,14Z,17Z)-eicosapentaenoate + reduced [NADPH--hemoprotein reductase] + O2 = (17S,18R)-epoxy-(5Z,8Z,11Z,14Z)-eicosatetraenoate + oxidized [NADPH--hemoprotein reductase] + H2O + H(+). The catalysed reaction is (4Z,7Z,10Z,13Z,16Z,19Z)-docosahexaenoate + reduced [NADPH--hemoprotein reductase] + O2 = (19R,20S)-epoxy-(4Z,7Z,10Z,13Z,16Z)-docosapentaenoate + oxidized [NADPH--hemoprotein reductase] + H2O + H(+). It catalyses the reaction (4Z,7Z,10Z,13Z,16Z,19Z)-docosahexaenoate + reduced [NADPH--hemoprotein reductase] + O2 = (19S,20R)-epoxy-(4Z,7Z,10Z,13Z,16Z)-docosapentaenoate + oxidized [NADPH--hemoprotein reductase] + H2O + H(+). The enzyme catalyses cholesterol + reduced [NADPH--hemoprotein reductase] + O2 = 25-hydroxycholesterol + oxidized [NADPH--hemoprotein reductase] + H2O + H(+). It carries out the reaction all-trans-retinol + reduced [NADPH--hemoprotein reductase] + O2 = all-trans-retinal + oxidized [NADPH--hemoprotein reductase] + 2 H2O + H(+). It functions in the pathway cofactor metabolism; retinol metabolism. It participates in lipid metabolism; fatty acid metabolism. Its pathway is steroid metabolism; cholesterol metabolism. Functionally, a cytochrome P450 monooxygenase involved in the metabolism of fatty acids, steroids and retinoids. Mechanistically, uses molecular oxygen inserting one oxygen atom into a substrate, and reducing the second into a water molecule, with two electrons provided by NADPH via cytochrome P450 reductase (NADPH--hemoprotein reductase). Catalyzes the epoxidation of double bonds of polyunsaturated fatty acids (PUFA). Metabolizes endocannabinoid arachidonoylethanolamide (anandamide) to 20-hydroxyeicosatetraenoic acid ethanolamide (20-HETE-EA) and 8,9-, 11,12-, and 14,15-epoxyeicosatrienoic acid ethanolamides (EpETrE-EAs), potentially modulating endocannabinoid system signaling. Catalyzes the hydroxylation of carbon-hydrogen bonds. Metabolizes cholesterol toward 25-hydroxycholesterol, a physiological regulator of cellular cholesterol homeostasis. Catalyzes the oxidative transformations of all-trans retinol to all-trans retinal, a precursor for the active form all-trans-retinoic acid. Also involved in the oxidative metabolism of drugs such as antiarrhythmics, adrenoceptor antagonists, and tricyclic antidepressants. The protein is Cytochrome P450 2D6 (CYP2D6) of Pan troglodytes (Chimpanzee).